Consider the following 860-residue polypeptide: Leucine--tRNA ligase (860 aa).

The 'HIGH' region signature appears at 42 to 52 (PYPSGRLHMGH). The short motif at 619–623 (KMSKS) is the 'KMSKS' region element. Lys-622 is an ATP binding site.

Belongs to the class-I aminoacyl-tRNA synthetase family.

The protein resides in the cytoplasm. The enzyme catalyses tRNA(Leu) + L-leucine + ATP = L-leucyl-tRNA(Leu) + AMP + diphosphate. The sequence is that of Leucine--tRNA ligase from Escherichia coli O6:K15:H31 (strain 536 / UPEC).